The primary structure comprises 361 residues: 3-dehydroquinate synthase (361 aa).

Residues serine 72 to lysine 77, threonine 130 to threonine 131, lysine 142, and lysine 151 each bind NAD(+). 3 residues coordinate Zn(2+): glutamate 184, histidine 247, and histidine 264.

This sequence belongs to the sugar phosphate cyclases superfamily. Dehydroquinate synthase family. The cofactor is Co(2+). Zn(2+) serves as cofactor. Requires NAD(+) as cofactor.

It localises to the cytoplasm. It catalyses the reaction 7-phospho-2-dehydro-3-deoxy-D-arabino-heptonate = 3-dehydroquinate + phosphate. It functions in the pathway metabolic intermediate biosynthesis; chorismate biosynthesis; chorismate from D-erythrose 4-phosphate and phosphoenolpyruvate: step 2/7. Functionally, catalyzes the conversion of 3-deoxy-D-arabino-heptulosonate 7-phosphate (DAHP) to dehydroquinate (DHQ). The sequence is that of 3-dehydroquinate synthase from Bacillus cereus (strain ZK / E33L).